We begin with the raw amino-acid sequence, 834 residues long: Glycerol-3-phosphate acyltransferase (834 aa).

The HXXXXD motif motif lies at 309-314 (CHRSHI).

This sequence belongs to the GPAT/DAPAT family.

It is found in the cell inner membrane. The catalysed reaction is sn-glycerol 3-phosphate + an acyl-CoA = a 1-acyl-sn-glycero-3-phosphate + CoA. The protein operates within phospholipid metabolism; CDP-diacylglycerol biosynthesis; CDP-diacylglycerol from sn-glycerol 3-phosphate: step 1/3. The protein is Glycerol-3-phosphate acyltransferase of Pseudomonas aeruginosa (strain LESB58).